A 1873-amino-acid chain; its full sequence is Ankyrin repeat domain-containing protein 31 (1873 aa).

Disordered stretches follow at residues 1–27 (MEEGVQAPDWDSDETVIEGSVTESDLE) and 361–380 (EPLSNKRNSNSVTNSSDQET). Positions 361-379 (EPLSNKRNSNSVTNSSDQE) are enriched in polar residues. 3 ANK repeats span residues 488–517 (FGENLVYKAALHDDADLVHHCIKKGGNVNQ), 521–550 (AGWTALHEASVGGFYRTASELLKGGADVNI), and 554–583 (YQITPLHDAVMNGHYKVAELLLLNGADPLF). Positions 707 to 740 (TGLRKGNLHNVKDPNTNVPKGIGRRKTQHKRTQV) are disordered. Residues 728–737 (IGRRKTQHKR) are compositionally biased toward basic residues. 3 ANK repeats span residues 1154–1183 (RGESQLHLAVRRGNLPLVKALIESGADVNL), 1187–1216 (AGWTPLHEASNEGSIDIIVELLKAGAKVNC), and 1220–1249 (DGILPLHDAVANNHLKAAEILLQNGANPNQ). Disordered regions lie at residues 1242-1263 (QNGANPNQKDQKQKSALDEADD), 1449-1482 (RSEISSEKDSQELTSLENLEHPQSGSLSPVSGSM), 1512-1549 (FSGNDMNSKQNGSDCTLDGFPKSRHSDGTEKNKLPSQP), and 1606-1634 (CDQDLSNYDPKRGNRKTSSQQSPTGASES). A compositionally biased stretch (basic and acidic residues) spans 1250-1263 (KDQKQKSALDEADD). Composition is skewed to polar residues over residues 1460 to 1482 (ELTSLENLEHPQSGSLSPVSGSM) and 1515 to 1525 (NDMNSKQNGSD). A compositionally biased stretch (basic and acidic residues) spans 1535–1544 (RHSDGTEKNK). The segment covering 1621–1632 (KTSSQQSPTGAS) has biased composition (polar residues). Residues 1683–1778 (KKALNYSTAP…TYLGKELLRY (96 aa)) enclose the RAMA domain.

Interacts with REC114; the interaction is direct. Interacts with IHO1.

Its subcellular location is the nucleus. It is found in the chromosome. Required for DNA double-strand breaks (DSBs) formation during meiotic recombination. Regulates the spatial and temporal patterns of pre-DSB recombinosome assembly and recombination activity by acting as a scaffold that anchors REC114 and other factors to specific genomic locations, thereby regulating DSB formation. Plays a key role in recombination in the pseudoautosomal regions of sex chromosomes. This is Ankyrin repeat domain-containing protein 31 from Homo sapiens (Human).